Consider the following 346-residue polypeptide: Uroporphyrinogen decarboxylase (346 aa).

Substrate-binding positions include 26 to 30 (RQAGR), Asp-76, Tyr-153, Ser-208, and His-323.

This sequence belongs to the uroporphyrinogen decarboxylase family. As to quaternary structure, homodimer.

It is found in the cytoplasm. The enzyme catalyses uroporphyrinogen III + 4 H(+) = coproporphyrinogen III + 4 CO2. It participates in porphyrin-containing compound metabolism; protoporphyrin-IX biosynthesis; coproporphyrinogen-III from 5-aminolevulinate: step 4/4. Functionally, catalyzes the decarboxylation of four acetate groups of uroporphyrinogen-III to yield coproporphyrinogen-III. The chain is Uroporphyrinogen decarboxylase from Prochlorococcus marinus (strain MIT 9301).